Consider the following 573-residue polypeptide: 3-(3-hydroxy-phenyl)propionate/3-hydroxycinnamic acid hydroxylase (573 aa).

Residues Asp-18–Glu-47 and Phe-283–Asp-293 contribute to the FAD site.

This sequence belongs to the PheA/TfdB FAD monooxygenase family. The cofactor is FAD.

The enzyme catalyses 3-(3-hydroxyphenyl)propanoate + NADH + O2 + H(+) = 3-(2,3-dihydroxyphenyl)propanoate + NAD(+) + H2O. The catalysed reaction is (2E)-3-(3-hydroxyphenyl)prop-2-enoate + NADH + O2 + H(+) = (2E)-3-(2,3-dihydroxyphenyl)prop-2-enoate + NAD(+) + H2O. It participates in aromatic compound metabolism; 3-phenylpropanoate degradation. Its function is as follows. Catalyzes the insertion of one atom of molecular oxygen into position 2 of the phenyl ring of 3-(3-hydroxyphenyl)propionate (3-HPP) and hydroxycinnamic acid (3HCI). This is 3-(3-hydroxy-phenyl)propionate/3-hydroxycinnamic acid hydroxylase from Mycobacterium sp. (strain KMS).